The following is a 248-amino-acid chain: Small ribosomal subunit protein uS3 (248 aa).

The 69-residue stretch at 39-107 folds into the KH type-2 domain; sequence IRQMLLKQLK…EVFINIVEIR (69 aa). A disordered region spans residues 214-248; the sequence is AVDKRMTAESEGPSSGRPPRRDRDRDRDRDRDSAA. The segment covering 232–248 has biased composition (basic and acidic residues); that stretch reads PRRDRDRDRDRDRDSAA.

This sequence belongs to the universal ribosomal protein uS3 family. Part of the 30S ribosomal subunit. Forms a tight complex with proteins S10 and S14.

Functionally, binds the lower part of the 30S subunit head. Binds mRNA in the 70S ribosome, positioning it for translation. The chain is Small ribosomal subunit protein uS3 from Azorhizobium caulinodans (strain ATCC 43989 / DSM 5975 / JCM 20966 / LMG 6465 / NBRC 14845 / NCIMB 13405 / ORS 571).